We begin with the raw amino-acid sequence, 99 residues long: Ubiquitin-related modifier 1 homolog (99 aa).

A 1-thioglycine modification is found at Gly-99. Gly-99 is covalently cross-linked (Glycyl lysine isopeptide (Gly-Lys) (interchain with K-? in acceptor proteins)).

It belongs to the URM1 family. C-terminal thiocarboxylation occurs in 2 steps, it is first acyl-adenylated (-COAMP) via the hesA/moeB/thiF part of the MOCS3 homolog, then thiocarboxylated (-COSH) via the rhodanese domain of the MOCS3 homolog.

It is found in the cytoplasm. It functions in the pathway tRNA modification; 5-methoxycarbonylmethyl-2-thiouridine-tRNA biosynthesis. Functionally, acts as a sulfur carrier required for 2-thiolation of mcm(5)S(2)U at tRNA wobble positions of cytosolic tRNA(Lys), tRNA(Glu) and tRNA(Gln). Serves as sulfur donor in tRNA 2-thiolation reaction by being thiocarboxylated (-COSH) at its C-terminus by MOCS3. The sulfur is then transferred to tRNA to form 2-thiolation of mcm(5)S(2)U. Also acts as a ubiquitin-like protein (UBL) that is covalently conjugated via an isopeptide bond to lysine residues of target proteins. The thiocarboxylated form serves as substrate for conjugation and oxidative stress specifically induces the formation of UBL-protein conjugates. The sequence is that of Ubiquitin-related modifier 1 homolog from Chlamydomonas reinhardtii (Chlamydomonas smithii).